The chain runs to 381 residues: Protein-glutamate methylesterase/protein-glutamine glutaminase (381 aa).

The 119-residue stretch at 20-138 folds into the Response regulatory domain; sequence RVMVVDDSVV…EIAAADIFKH (119 aa). D71 is subject to 4-aspartylphosphate. The tract at residues 154–176 is disordered; that stretch reads PAALASAREPEPRPIQATPVPAH. A CheB-type methylesterase domain is found at 183 to 373; the sequence is PFSTHAPRAL…PLQQIAPKLV (191 aa). Active-site residues include S197, H225, and D321.

Belongs to the CheB family. Phosphorylated by CheA. Phosphorylation of the N-terminal regulatory domain activates the methylesterase activity.

It is found in the cytoplasm. The enzyme catalyses [protein]-L-glutamate 5-O-methyl ester + H2O = L-glutamyl-[protein] + methanol + H(+). The catalysed reaction is L-glutaminyl-[protein] + H2O = L-glutamyl-[protein] + NH4(+). Functionally, involved in chemotaxis. Part of a chemotaxis signal transduction system that modulates chemotaxis in response to various stimuli. Catalyzes the demethylation of specific methylglutamate residues introduced into the chemoreceptors (methyl-accepting chemotaxis proteins or MCP) by CheR. Also mediates the irreversible deamidation of specific glutamine residues to glutamic acid. The polypeptide is Protein-glutamate methylesterase/protein-glutamine glutaminase (Nitrobacter hamburgensis (strain DSM 10229 / NCIMB 13809 / X14)).